The following is a 247-amino-acid chain: Segregation and condensation protein A (247 aa).

Belongs to the ScpA family. Component of a cohesin-like complex composed of ScpA, ScpB and the Smc homodimer, in which ScpA and ScpB bind to the head domain of Smc. The presence of the three proteins is required for the association of the complex with DNA.

It is found in the cytoplasm. Functionally, participates in chromosomal partition during cell division. May act via the formation of a condensin-like complex containing Smc and ScpB that pull DNA away from mid-cell into both cell halves. The sequence is that of Segregation and condensation protein A from Bacillus cereus (strain AH187).